A 262-amino-acid chain; its full sequence is MLQYPQIDPVALRIGPLAIHWYGLMYLIGFALVYALGRRRITSGHTTSMTVRDLEDLIFYSVLGVVLGGRLGYVLFYKPAYYLANPLEIFYLWEGGMSFHGGLIGVIVVMLLFAHKKRLGFFTVSDFIAPLIPLGLAAGRLGNFINGELWGRPTDVPWAMVFPQSGDGLPRHPSQLYELGLEGIVLFALLWWYSSKPRAAGQVSAMFLMGYGAFRFLVEFTREPDNFLGLLAAGLSMGQWLSIPMVLAGAGLYLFTARPPSR.

4 consecutive transmembrane segments (helical) span residues 17 to 37, 57 to 77, 95 to 115, and 119 to 139; these read LAIH…YALG, LIFY…VLFY, GGMS…LFAH, and LGFF…LAAG. Residue Arg-140 participates in a 1,2-diacyl-sn-glycero-3-phospho-(1'-sn-glycerol) binding. 3 helical membrane passes run 173–193, 200–220, and 227–247; these read PSQL…LWWY, AGQV…LVEF, and FLGL…PMVL.

Belongs to the Lgt family.

Its subcellular location is the cell inner membrane. It carries out the reaction L-cysteinyl-[prolipoprotein] + a 1,2-diacyl-sn-glycero-3-phospho-(1'-sn-glycerol) = an S-1,2-diacyl-sn-glyceryl-L-cysteinyl-[prolipoprotein] + sn-glycerol 1-phosphate + H(+). It functions in the pathway protein modification; lipoprotein biosynthesis (diacylglyceryl transfer). In terms of biological role, catalyzes the transfer of the diacylglyceryl group from phosphatidylglycerol to the sulfhydryl group of the N-terminal cysteine of a prolipoprotein, the first step in the formation of mature lipoproteins. In Bordetella parapertussis (strain 12822 / ATCC BAA-587 / NCTC 13253), this protein is Phosphatidylglycerol--prolipoprotein diacylglyceryl transferase.